A 228-amino-acid chain; its full sequence is 7-cyano-7-deazaguanine synthase (228 aa).

ATP is bound at residue 7–17; sequence LSGGLDSSTAL. Zn(2+) contacts are provided by Cys-190, Cys-202, Cys-205, and Cys-208.

It belongs to the QueC family. Zn(2+) serves as cofactor.

The catalysed reaction is 7-carboxy-7-deazaguanine + NH4(+) + ATP = 7-cyano-7-deazaguanine + ADP + phosphate + H2O + H(+). It participates in purine metabolism; 7-cyano-7-deazaguanine biosynthesis. Catalyzes the ATP-dependent conversion of 7-carboxy-7-deazaguanine (CDG) to 7-cyano-7-deazaguanine (preQ(0)). In Acaryochloris marina (strain MBIC 11017), this protein is 7-cyano-7-deazaguanine synthase.